A 500-amino-acid chain; its full sequence is Lysine--tRNA ligase (500 aa).

Mg(2+)-binding residues include Glu411 and Glu418.

The protein belongs to the class-II aminoacyl-tRNA synthetase family. Homodimer. It depends on Mg(2+) as a cofactor.

The protein resides in the cytoplasm. The enzyme catalyses tRNA(Lys) + L-lysine + ATP = L-lysyl-tRNA(Lys) + AMP + diphosphate. This Actinobacillus pleuropneumoniae serotype 5b (strain L20) protein is Lysine--tRNA ligase.